The following is a 296-amino-acid chain: Cytidine deaminase (296 aa).

CMP/dCMP-type deaminase domains are found at residues 47 to 167 (EESE…FGPS) and 186 to 296 (DSSD…IDPA). 88–90 (NLE) lines the substrate pocket. Residue His-101 coordinates Zn(2+). Catalysis depends on Glu-103, which acts as the Proton donor. 2 residues coordinate Zn(2+): Cys-128 and Cys-131.

Belongs to the cytidine and deoxycytidylate deaminase family. Homodimer. Zn(2+) is required as a cofactor.

It catalyses the reaction cytidine + H2O + H(+) = uridine + NH4(+). The enzyme catalyses 2'-deoxycytidine + H2O + H(+) = 2'-deoxyuridine + NH4(+). In terms of biological role, this enzyme scavenges exogenous and endogenous cytidine and 2'-deoxycytidine for UMP synthesis. This is Cytidine deaminase from Shewanella woodyi (strain ATCC 51908 / MS32).